The sequence spans 199 residues: Holliday junction branch migration complex subunit RuvA (199 aa).

A domain I region spans residues 1–64 (MIALLTGKLA…EDAINLYGFR (64 aa)). Residues 65–143 (TQQEKELFQL…KLGLAQPQAG (79 aa)) are domain II. Residues 144 to 148 (GATAP) are flexible linker. The tract at residues 149–199 (AKQEIRDDVLSALINLGYKEAVVQKALAELKVTEDATVELVLKQALKILMK) is domain III.

This sequence belongs to the RuvA family. Homotetramer. Forms an RuvA(8)-RuvB(12)-Holliday junction (HJ) complex. HJ DNA is sandwiched between 2 RuvA tetramers; dsDNA enters through RuvA and exits via RuvB. An RuvB hexamer assembles on each DNA strand where it exits the tetramer. Each RuvB hexamer is contacted by two RuvA subunits (via domain III) on 2 adjacent RuvB subunits; this complex drives branch migration. In the full resolvosome a probable DNA-RuvA(4)-RuvB(12)-RuvC(2) complex forms which resolves the HJ.

Its subcellular location is the cytoplasm. In terms of biological role, the RuvA-RuvB-RuvC complex processes Holliday junction (HJ) DNA during genetic recombination and DNA repair, while the RuvA-RuvB complex plays an important role in the rescue of blocked DNA replication forks via replication fork reversal (RFR). RuvA specifically binds to HJ cruciform DNA, conferring on it an open structure. The RuvB hexamer acts as an ATP-dependent pump, pulling dsDNA into and through the RuvAB complex. HJ branch migration allows RuvC to scan DNA until it finds its consensus sequence, where it cleaves and resolves the cruciform DNA. This chain is Holliday junction branch migration complex subunit RuvA, found in Geobacter sp. (strain M21).